Consider the following 92-residue polypeptide: Small ribosomal subunit protein uS19 (92 aa).

The protein belongs to the universal ribosomal protein uS19 family.

In terms of biological role, protein S19 forms a complex with S13 that binds strongly to the 16S ribosomal RNA. The protein is Small ribosomal subunit protein uS19 of Borrelia recurrentis (strain A1).